Here is a 207-residue protein sequence, read N- to C-terminus: Dephospho-CoA kinase (207 aa).

Residues 5–207 form the DPCK domain; it reads IVGLTGGIAS…AALQTHRIEN (203 aa). Residue 13–18 coordinates ATP; the sequence is ASGKSA.

It belongs to the CoaE family.

Its subcellular location is the cytoplasm. The enzyme catalyses 3'-dephospho-CoA + ATP = ADP + CoA + H(+). It functions in the pathway cofactor biosynthesis; coenzyme A biosynthesis; CoA from (R)-pantothenate: step 5/5. Functionally, catalyzes the phosphorylation of the 3'-hydroxyl group of dephosphocoenzyme A to form coenzyme A. The chain is Dephospho-CoA kinase from Xanthomonas campestris pv. campestris (strain ATCC 33913 / DSM 3586 / NCPPB 528 / LMG 568 / P 25).